The chain runs to 161 residues: Allophycocyanin alpha chain (161 aa).

Asparagine 71 carries the N4-methylasparagine modification. Residue cysteine 81 coordinates (2R,3E)-phycocyanobilin.

This sequence belongs to the phycobiliprotein family. As to quaternary structure, heterodimer of an alpha and a beta chain. Contains one covalently linked phycocyanobilin chromophore.

The protein localises to the cellular thylakoid membrane. Its function is as follows. Light-harvesting photosynthetic bile pigment-protein from the phycobiliprotein complex. Allophycocyanin has a maximum absorption at approximately 650 nanometers. This is Allophycocyanin alpha chain (apcA) from Synechocystis sp. (strain ATCC 27184 / PCC 6803 / Kazusa).